Consider the following 473-residue polypeptide: UTP--glucose-1-phosphate uridylyltransferase (473 aa).

Residues 89–92 (LNGG), Lys103, Gln166, and Gly195 each bind UTP. Substrate is bound at residue 91–92 (GG). Substrate-binding positions include His196 and 224-226 (NSD). Residues Asp226 and Lys364 each contribute to the UTP site.

The protein belongs to the UDPGP type 1 family.

The protein resides in the cytoplasm. It carries out the reaction alpha-D-glucose 1-phosphate + UTP + H(+) = UDP-alpha-D-glucose + diphosphate. Functionally, plays a central role as a glucosyl donor in cellular metabolic pathways. The chain is UTP--glucose-1-phosphate uridylyltransferase from Hordeum vulgare (Barley).